The sequence spans 858 residues: Chitin synthase 2 (858 aa).

Basic and acidic residues predominate over residues Met-1 to Gln-12. Positions Met-1–Arg-116 are disordered. Over residues Leu-15–Pro-24 the composition is skewed to polar residues. Pro residues-rich tracts occupy residues Ala-52–Pro-68 and Pro-76–Pro-89. The next 7 membrane-spanning stretches (helical) occupy residues Arg-500–Arg-517, Thr-540–Leu-560, Leu-586–Leu-606, Met-621–Val-641, Asn-665–Leu-685, Val-799–Ile-819, and Ala-825–Thr-845.

Belongs to the chitin synthase family.

The protein localises to the cell membrane. The catalysed reaction is [(1-&gt;4)-N-acetyl-beta-D-glucosaminyl](n) + UDP-N-acetyl-alpha-D-glucosamine = [(1-&gt;4)-N-acetyl-beta-D-glucosaminyl](n+1) + UDP + H(+). In terms of biological role, polymerizes chitin, a structural polymer of the cell wall and septum, by transferring the sugar moiety of UDP-GlcNAc to the non-reducing end of the growing chitin polymer. The protein is Chitin synthase 2 (CHS2) of Rhizopus oligosporus (Rhizopus microsporus var. oligosporus).